The sequence spans 392 residues: Homoserine O-acetyltransferase (392 aa).

Residues 52–356 enclose the AB hydrolase-1 domain; it reads NVVVVLHALT…ICGHDGFLVE (305 aa). Ser157 acts as the Nucleophile in catalysis. Arg227 contributes to the substrate binding site. Catalysis depends on residues Asp320 and His350. Asp351 contacts substrate. Residues 373-392 form a disordered region; the sequence is SQSAGPGGAGPGSRKGTTRR.

This sequence belongs to the AB hydrolase superfamily. MetX family. In terms of assembly, homodimer.

It is found in the cytoplasm. The enzyme catalyses L-homoserine + acetyl-CoA = O-acetyl-L-homoserine + CoA. The protein operates within amino-acid biosynthesis; L-methionine biosynthesis via de novo pathway; O-acetyl-L-homoserine from L-homoserine: step 1/1. Functionally, transfers an acetyl group from acetyl-CoA to L-homoserine, forming acetyl-L-homoserine. This is Homoserine O-acetyltransferase from Mycobacterium avium (strain 104).